A 176-amino-acid polypeptide reads, in one-letter code: Lipoprotein signal peptidase (176 aa).

Transmembrane regions (helical) follow at residues 26–46 (LWMAFALLVVVLDQFFKIVIV), 60–80 (FFNLVLVYNKGAAFSFLADAG), 82–102 (WQRWFFTGLGLVVGAFIVWLL), and 107–127 (GQKLFCFAVSLILGGAVGNVV). Active-site residues include Asp137 and Asp155. A helical transmembrane segment spans residues 147–167 (HWPAFNVADCAITVGAVLLIV).

This sequence belongs to the peptidase A8 family.

It localises to the cell inner membrane. The catalysed reaction is Release of signal peptides from bacterial membrane prolipoproteins. Hydrolyzes -Xaa-Yaa-Zaa-|-(S,diacylglyceryl)Cys-, in which Xaa is hydrophobic (preferably Leu), and Yaa (Ala or Ser) and Zaa (Gly or Ala) have small, neutral side chains.. Its pathway is protein modification; lipoprotein biosynthesis (signal peptide cleavage). In terms of biological role, this protein specifically catalyzes the removal of signal peptides from prolipoproteins. The protein is Lipoprotein signal peptidase of Cupriavidus pinatubonensis (strain JMP 134 / LMG 1197) (Cupriavidus necator (strain JMP 134)).